A 408-amino-acid polypeptide reads, in one-letter code: MSDIKKVVLAYSGGLDTSVILKWLQDEYQCEVVTFTADIGQGEEVEPARQKAVSLGIKPENIFIEDLREEFVRDFVYPMFRANTIYEGEYLLGTSIARPLIAKRQIEIANQVGADAVSHGATGKGNDQVRFELGYYALKPDVKVIAPWREWDLLSREKLLAYAETHGIDISKKKNGGSPYSMDANLLHISYEGTVLEDPAQEPEEDMWLWSVSPENAPDQAEYVELEYRKGDIVAVNGQALSPAGVLTELNRLGNKHGIGRLDIVENRYVGMKSRGCYETPGGTIMLKAHRAIESITLDREVAHLKDELMPKYAQLIYTGYWWSPERAMLQQMIDASQATVNGWVRLKLYKGNVIVVGRESKTDSLFDPTIATFDEDGGAYNHADAAGFIRLNALRMRIAANARNKRG.

ATP-binding positions include 10-18 (AYSGGLDTS) and Ala37. L-citrulline contacts are provided by Tyr90 and Ser95. Gly120 contributes to the ATP binding site. 3 residues coordinate L-aspartate: Thr122, Asn126, and Asp127. Asn126 is a binding site for L-citrulline. Residues Arg130, Ser181, Ser190, Glu266, and Tyr278 each contribute to the L-citrulline site.

Belongs to the argininosuccinate synthase family. Type 1 subfamily. In terms of assembly, homotetramer.

The protein localises to the cytoplasm. It carries out the reaction L-citrulline + L-aspartate + ATP = 2-(N(omega)-L-arginino)succinate + AMP + diphosphate + H(+). Its pathway is amino-acid biosynthesis; L-arginine biosynthesis; L-arginine from L-ornithine and carbamoyl phosphate: step 2/3. The sequence is that of Argininosuccinate synthase from Chromobacterium violaceum (strain ATCC 12472 / DSM 30191 / JCM 1249 / CCUG 213 / NBRC 12614 / NCIMB 9131 / NCTC 9757 / MK).